The sequence spans 243 residues: Leucyl/phenylalanyl-tRNA--protein transferase (243 aa).

Belongs to the L/F-transferase family.

It localises to the cytoplasm. It carries out the reaction N-terminal L-lysyl-[protein] + L-leucyl-tRNA(Leu) = N-terminal L-leucyl-L-lysyl-[protein] + tRNA(Leu) + H(+). The enzyme catalyses N-terminal L-arginyl-[protein] + L-leucyl-tRNA(Leu) = N-terminal L-leucyl-L-arginyl-[protein] + tRNA(Leu) + H(+). It catalyses the reaction L-phenylalanyl-tRNA(Phe) + an N-terminal L-alpha-aminoacyl-[protein] = an N-terminal L-phenylalanyl-L-alpha-aminoacyl-[protein] + tRNA(Phe). In terms of biological role, functions in the N-end rule pathway of protein degradation where it conjugates Leu, Phe and, less efficiently, Met from aminoacyl-tRNAs to the N-termini of proteins containing an N-terminal arginine or lysine. In Vibrio cholerae serotype O1 (strain ATCC 39541 / Classical Ogawa 395 / O395), this protein is Leucyl/phenylalanyl-tRNA--protein transferase.